A 515-amino-acid chain; its full sequence is Portal protein (515 aa).

Belongs to the podoviridae head-to-tail connector protein family. As to quaternary structure, homododecamer.

It is found in the virion. In terms of biological role, forms the portal vertex of the capsid. This portal plays critical roles in head assembly, genome packaging, neck/tail attachment, and genome ejection. The portal protein multimerizes as a single ring-shaped homododecamer arranged around a central channel. The protein is Portal protein of Salmonella typhimurium (Bacteriophage SP6).